The sequence spans 288 residues: ATP phosphoribosyltransferase (288 aa).

Belongs to the ATP phosphoribosyltransferase family. Long subfamily. Mg(2+) is required as a cofactor.

The protein localises to the cytoplasm. It carries out the reaction 1-(5-phospho-beta-D-ribosyl)-ATP + diphosphate = 5-phospho-alpha-D-ribose 1-diphosphate + ATP. The protein operates within amino-acid biosynthesis; L-histidine biosynthesis; L-histidine from 5-phospho-alpha-D-ribose 1-diphosphate: step 1/9. With respect to regulation, feedback inhibited by histidine. In terms of biological role, catalyzes the condensation of ATP and 5-phosphoribose 1-diphosphate to form N'-(5'-phosphoribosyl)-ATP (PR-ATP). Has a crucial role in the pathway because the rate of histidine biosynthesis seems to be controlled primarily by regulation of HisG enzymatic activity. The chain is ATP phosphoribosyltransferase from Methanococcus maripaludis (strain C6 / ATCC BAA-1332).